Reading from the N-terminus, the 264-residue chain is Anamorsin homolog 2 (264 aa).

Residues 1–142 are N-terminal SAM-like domain; that stretch reads MAATAAALAV…KVSWSMGSSF (142 aa). The tract at residues 143–174 is linker; it reads PLKKATKGLPKIQIDDDSELIDEDSLLTEDDL. Residues Cys185, Cys194, Cys197, and Cys199 each contribute to the [2Fe-2S] cluster site. Residues 185–199 are fe-S binding site A; sequence CEVGATRKACKNCTC. Residues Cys225, Cys228, Cys236, and Cys239 each coordinate [4Fe-4S] cluster. Short sequence motifs (cx2C motif) lie at residues 225–228 and 236–239; these read CGNC and CGTC. Residues 225-239 are fe-S binding site B; the sequence is CGNCGLGDAFRCGTC.

Belongs to the anamorsin family. As to quaternary structure, monomer. [2Fe-2S] cluster serves as cofactor. It depends on [4Fe-4S] cluster as a cofactor.

Its subcellular location is the cytoplasm. It localises to the mitochondrion intermembrane space. Component of the cytosolic iron-sulfur (Fe-S) protein assembly (CIA) machinery. Required for the maturation of extramitochondrial Fe-S proteins. Part of an electron transfer chain functioning in an early step of cytosolic Fe-S biogenesis, facilitating the de novo assembly of a [4Fe-4S] cluster on the cytosolic Fe-S scaffold complex. Electrons are transferred from NADPH via a FAD- and FMN-containing diflavin oxidoreductase. Together with the diflavin oxidoreductase, also required for the assembly of the diferric tyrosyl radical cofactor of ribonucleotide reductase (RNR), probably by providing electrons for reduction during radical cofactor maturation in the catalytic small subunit. The sequence is that of Anamorsin homolog 2 from Oryza sativa subsp. japonica (Rice).